We begin with the raw amino-acid sequence, 137 residues long: Acyl carrier protein 4, chloroplastic (137 aa).

Residues 1 to 48 constitute a chloroplast transit peptide; it reads MASLSTTSLSFKAPSTTISQVLRKASSSQSVTFGRFTSSTKSLRLQIS. The Carrier domain occupies 53–128; sequence AETVQKVSDI…EAADLIEDLV (76 aa). Ser-88 carries the post-translational modification O-(pantetheine 4'-phosphoryl)serine.

The protein belongs to the acyl carrier protein (ACP) family. In terms of processing, 4'-phosphopantetheine is transferred from CoA to a specific serine of apo-ACP by acpS. This modification is essential for activity because fatty acids are bound in thioester linkage to the sulfhydryl of the prosthetic group.

The protein localises to the plastid. It localises to the chloroplast. Functionally, carrier of the growing fatty acid chain in fatty acid biosynthesis that plays a major role in the biosynthesis of fatty acids in leaves. Required for the biosynthesis of chloroplast photosynthetic membrane lipids such as monogalactosyldiacylglycerol, digalactosyldiacylglycerol and phosphatidylglycerol. Is essential for the biosynthesis of the cuticular wax and cutin polymers in leaves, and for the establishment of systemic acquired resistance (SAR). The polypeptide is Acyl carrier protein 4, chloroplastic (ACP4) (Arabidopsis thaliana (Mouse-ear cress)).